The chain runs to 88 residues: Antitoxin VapB3 (88 aa).

Its function is as follows. Antitoxin component of a type II toxin-antitoxin (TA) system. The polypeptide is Antitoxin VapB3 (vapB3) (Mycobacterium tuberculosis (strain CDC 1551 / Oshkosh)).